Consider the following 254-residue polypeptide: Proteasome activator complex subunit 3 (254 aa).

2 positions are modified to N6-acetyllysine: K6 and K14. K195 is subject to N6-acetyllysine; by P300/CBP.

In terms of assembly, homoheptamer. Post-translationally, acetylation at the major site Lys-195 is important for oligomerization and ability to degrade its target substrates. Deacetylated by SIRT1.

Functionally, implicated in immunoproteasome assembly and required for efficient antigen processing. The PA28 activator complex enhances the generation of class I binding peptides by altering the cleavage pattern of the proteasome. The sequence is that of Proteasome activator complex subunit 3 from Gallus gallus (Chicken).